A 481-amino-acid chain; its full sequence is RuvB-like helicase 2 (481 aa).

Residue 76–83 (GPPSTGKT) participates in ATP binding.

Belongs to the RuvB family. In terms of assembly, may form heterododecamers with hel-1/rvb1. Component of the SWR1 chromatin remodeling complex, the INO80 chromatin remodeling complex, and of the R2TP complex.

Its subcellular location is the nucleus. The enzyme catalyses ATP + H2O = ADP + phosphate + H(+). Functionally, DNA helicase which participates in several chromatin remodeling complexes, including the SWR1 and the INO80 complexes. The SWR1 complex mediates the ATP-dependent exchange of histone H2A for the H2A variant H2A.Z leading to transcriptional regulation of selected genes by chromatin remodeling. The INO80 complex remodels chromatin by shifting nucleosomes and is involved in DNA repair. Also involved in pre-rRNA processing. This Neurospora crassa (strain ATCC 24698 / 74-OR23-1A / CBS 708.71 / DSM 1257 / FGSC 987) protein is RuvB-like helicase 2 (hel-2).